Here is a 384-residue protein sequence, read N- to C-terminus: Eukaryotic translation initiation factor 3 subunit M (384 aa).

The region spanning 184-346 (ENRKAIEAMI…KKILITGAFP (163 aa)) is the PCI domain.

It belongs to the eIF-3 subunit M family. In terms of assembly, component of the eukaryotic translation initiation factor 3 (eIF-3) complex.

The protein resides in the cytoplasm. Component of the eukaryotic translation initiation factor 3 (eIF-3) complex, which is involved in protein synthesis of a specialized repertoire of mRNAs and, together with other initiation factors, stimulates binding of mRNA and methionyl-tRNAi to the 40S ribosome. The eIF-3 complex specifically targets and initiates translation of a subset of mRNAs involved in cell proliferation. The polypeptide is Eukaryotic translation initiation factor 3 subunit M (Schistosoma japonicum (Blood fluke)).